The primary structure comprises 199 residues: Probable cobalt-precorrin-6B C(15)-methyltransferase (decarboxylating) (199 aa).

Residues Thr-24, 48-52, Asp-72, and Ala-101 contribute to the S-adenosyl-L-methionine site; that span reads GCGTG.

It belongs to the methyltransferase superfamily. Archaeal-type CbiT family.

The catalysed reaction is Co-precorrin-6B + S-adenosyl-L-methionine = Co-precorrin-7 + S-adenosyl-L-homocysteine + CO2. It functions in the pathway cofactor biosynthesis; adenosylcobalamin biosynthesis; cob(II)yrinate a,c-diamide from sirohydrochlorin (anaerobic route): step 8/10. Functionally, catalyzes the methylation of C-15 in cobalt-precorrin-6B followed by the decarboxylation of C-12 to form cobalt-precorrin-7. This chain is Probable cobalt-precorrin-6B C(15)-methyltransferase (decarboxylating), found in Saccharolobus islandicus (strain Y.N.15.51 / Yellowstone #2) (Sulfolobus islandicus).